A 245-amino-acid polypeptide reads, in one-letter code: 14-3-3 protein theta (245 aa).

It belongs to the 14-3-3 family. In terms of assembly, homodimer, and heterodimer with other family members.

It is found in the cytoplasm. Adapter protein implicated in the regulation of a large spectrum of both general and specialized signaling pathways. Binds to a large number of partners, usually by recognition of a phosphoserine or phosphothreonine motif. Binding generally results in the modulation of the activity of the binding partner. This chain is 14-3-3 protein theta (YWHAQ), found in Gallus gallus (Chicken).